A 567-amino-acid chain; its full sequence is Beta-galactoside-specific lectin 2 (567 aa).

Residues 1 to 33 form the signal peptide; that stretch reads MNARLASSRAWVWCFLMVGLVCGATAKAESKIN. Residue asparagine 145 is glycosylated (N-linked (GlcNAc...) asparagine). Glutamate 198 is a catalytic residue. 2 cysteine pairs are disulfide-bonded: cysteine 280–cysteine 306 and cysteine 322–cysteine 341. Residues 288–301 constitute a propeptide, connecting peptide; the sequence is DVHNWPLVIRPVMV. A Ricin B-type lectin 1 domain is found at 309–439; the sequence is SEPTVRIVGR…DSLGQSWLAS (131 aa). D-galactose is bound at residue 324–326; sequence DVR. A glycan (N-linked (GlcNAc...) asparagine) is linked at asparagine 362. An intrachain disulfide couples cysteine 365 to cysteine 382. An N-linked (GlcNAc...) asparagine glycan is attached at asparagine 440. The Ricin B-type lectin 2 domain maps to 443-566; that stretch reads APREVTIYGF…GNPNQMWLPV (124 aa). 2 cysteine pairs are disulfide-bonded: cysteine 456–cysteine 469 and cysteine 495–cysteine 512. D-galactose is bound at residue 539–541; sequence DVR.

The protein belongs to the ribosome-inactivating protein family. Type 2 RIP subfamily. As to quaternary structure, disulfide-linked dimer of A and B chains.

It catalyses the reaction Endohydrolysis of the N-glycosidic bond at one specific adenosine on the 28S rRNA.. The A chain is responsible for inhibiting protein synthesis through the catalytic inactivation of 60S ribosomal subunits by removing adenine from position 4,324 of 28S rRNA. The B chain binds to cell receptors and probably facilitates the entry into the cell of the A chain; B chains are also responsible for cell agglutination (lectin activity). The polypeptide is Beta-galactoside-specific lectin 2 (Viscum album (European mistletoe)).